The primary structure comprises 450 residues: Glucose-6-phosphate isomerase (450 aa).

Glu290 acts as the Proton donor in catalysis. Catalysis depends on residues His311 and Lys425.

The protein belongs to the GPI family.

The protein resides in the cytoplasm. It carries out the reaction alpha-D-glucose 6-phosphate = beta-D-fructose 6-phosphate. It participates in carbohydrate biosynthesis; gluconeogenesis. Its pathway is carbohydrate degradation; glycolysis; D-glyceraldehyde 3-phosphate and glycerone phosphate from D-glucose: step 2/4. Catalyzes the reversible isomerization of glucose-6-phosphate to fructose-6-phosphate. The chain is Glucose-6-phosphate isomerase from Limosilactobacillus fermentum (Lactobacillus fermentum).